The following is a 95-amino-acid chain: Small ribosomal subunit protein bS6 (95 aa).

This sequence belongs to the bacterial ribosomal protein bS6 family.

Binds together with bS18 to 16S ribosomal RNA. This is Small ribosomal subunit protein bS6 from Bacillus pumilus (strain SAFR-032).